The primary structure comprises 218 residues: Small ribosomal subunit protein uS3c (218 aa).

The region spanning 47–118 is the KH type-2 domain; that stretch reads VQKNIRISSG…KLNIAITRIS (72 aa).

This sequence belongs to the universal ribosomal protein uS3 family. Part of the 30S ribosomal subunit.

It is found in the plastid. The protein resides in the chloroplast. The sequence is that of Small ribosomal subunit protein uS3c (rps3) from Barbarea verna (Land cress).